Here is an 823-residue protein sequence, read N- to C-terminus: Putative ankyrin repeat domain-containing protein 20A2 (823 aa).

ANK repeat units follow at residues 66-95, 99-128, 132-161, 165-194, and 198-227; these read QHRT…QIDV, ENRT…NPNL, YGNT…HIEA, DNNT…SSHA, and LRRS…DVFA. 2 disordered regions span residues 301 to 343 and 355 to 402; these read VPEK…EVED and VQTL…LSEN. A compositionally biased stretch (basic and acidic residues) spans 372–384; sequence QERHERSEKKQPQ. Coiled-coil stretches lie at residues 431–480, 565–724, and 776–805; these read KKLK…KQLE, EMIT…NNST, and LVLE…EKTE.

The protein is Putative ankyrin repeat domain-containing protein 20A2 of Homo sapiens (Human).